Here is a 1887-residue protein sequence, read N- to C-terminus: Fatty acid synthase subunit alpha (1887 aa).

Residue K37 forms a Glycyl lysine isopeptide (Lys-Gly) (interchain with G-Cter in ubiquitin) linkage. At S50 the chain carries Phosphoserine. Residues 96-120 (ELAAKEEPAKEEAPAPTPAASAPAP) form a disordered region. Basic and acidic residues predominate over residues 98–108 (AAKEEPAKEEA). In terms of domain architecture, Carrier spans 145–220 (VKASLLLHVL…ETFQDTFSGA (76 aa)). S180 bears the O-(pantetheine 4'-phosphoryl)serine mark. Residue S523 is modified to Phosphoserine. Positions 675–874 (DKYVLITGAG…CGAIIGWTRG (200 aa)) are beta-ketoacyl reductase. Residue S958 is modified to Phosphoserine. The region spanning 1123–1657 (QEVIVEEDLE…QKGGQAIVVH (535 aa)) is the Ketosynthase family 3 (KS3) domain. C1305 serves as the catalytic For beta-ketoacyl synthase activity. S1440 bears the Phosphoserine mark. Active-site for beta-ketoacyl synthase activity residues include H1542 and H1583. Residues D1772, V1773, and E1774 each coordinate Mg(2+). Residues 1772-1774 (DVE), Y1798, S1808, 1817-1827 (EAVFKSLGVKS), 1841-1844 (RVNK), and 1871-1873 (ISH) each bind acetyl-CoA. Mg(2+) is bound by residues S1872 and H1873.

It belongs to the thiolase-like superfamily. Fungal fatty acid synthetase subunit alpha family. As to quaternary structure, [Alpha(6)beta(6)] hexamers of two multifunctional subunits (alpha and beta). 4'-phosphopantetheine is transferred from CoA to a specific serine of the Acyl carrier domain by the C-terminal PPT domain. This modification is essential for activity because fatty acids are bound in thioester linkage to the sulfhydryl of the prosthetic group.

It carries out the reaction acetyl-CoA + n malonyl-CoA + 2n NADPH + 4n H(+) = a long-chain-acyl-CoA + n CoA + n CO2 + 2n NADP(+).. The catalysed reaction is a fatty acyl-[ACP] + malonyl-[ACP] + H(+) = a 3-oxoacyl-[ACP] + holo-[ACP] + CO2. It catalyses the reaction a (3R)-hydroxyacyl-[ACP] + NADP(+) = a 3-oxoacyl-[ACP] + NADPH + H(+). With respect to regulation, inhibited by cerulenin by covalent binding to active site of the ketoacyl synthase (KS) region. Fatty acid synthetase catalyzes the formation of long-chain fatty acids from acetyl-CoA, malonyl-CoA and NADPH. The alpha subunit contains domains for: acyl carrier protein, 3-oxoacyl-[acyl-carrier-protein] reductase, and 3-oxoacyl-[acyl-carrier-protein] synthase. This subunit coordinates the binding of the six beta subunits to the enzyme complex. In Saccharomyces cerevisiae (strain ATCC 204508 / S288c) (Baker's yeast), this protein is Fatty acid synthase subunit alpha (FAS2).